Consider the following 93-residue polypeptide: Small ribosomal subunit protein uS19 (93 aa).

The protein belongs to the universal ribosomal protein uS19 family.

In terms of biological role, protein S19 forms a complex with S13 that binds strongly to the 16S ribosomal RNA. The protein is Small ribosomal subunit protein uS19 of Ehrlichia ruminantium (strain Welgevonden).